The primary structure comprises 120 residues: Large ribosomal subunit protein bL19 (120 aa).

The protein belongs to the bacterial ribosomal protein bL19 family.

This protein is located at the 30S-50S ribosomal subunit interface and may play a role in the structure and function of the aminoacyl-tRNA binding site. This is Large ribosomal subunit protein bL19 from Acaryochloris marina (strain MBIC 11017).